The chain runs to 442 residues: Inner membrane protein PPF-1, chloroplastic (442 aa).

At 1–108 (MAKTLISSPS…EFVLKVLKDG (108 aa)) the chain is on the lumenal side. Residues 109–129 (LSSVHVPYSYGFAIILLTVIV) traverse the membrane as a helical segment. Residues 130-183 (KAATLPLTKQQVESTLAMQNLQPKIKAIQERYAGNQERIQLETSRLYTQAGVNP) lie on the Stromal side of the membrane. The chain crosses the membrane as a helical span at residues 184–204 (LAGCLPTLATIPVWIGLYQAL). The Lumenal segment spans residues 205 to 296 (SNVANEGLLT…QKNTLLIFKF (92 aa)). Residues 297–317 (LPLMIGYFSLSVPSGLTIYWF) traverse the membrane as a helical segment. Topologically, residues 318–442 (TNNVLSTAQQ…SKRSKRKPVA (125 aa)) are stromal. 2 disordered regions span residues 350 to 371 (AGQAKRSASKPEKGGERFRQLK) and 390 to 442 (PLAS…KPVA). Residues 358 to 371 (SKPEKGGERFRQLK) are compositionally biased toward basic and acidic residues. Over residues 414 to 427 (ESNTSKVSQEVQSF) the composition is skewed to polar residues. Basic residues predominate over residues 431–442 (RRSKRSKRKPVA).

The protein belongs to the OXA1/ALB3/YidC (TC 2.A.9.2) family. Highly expressed in apical buds. Low levels of expression in leaves. Not expressed in roots, and stems.

It localises to the plastid. The protein resides in the chloroplast thylakoid membrane. Functionally, may be required for the insertion of some integral membrane proteins into the chloroplast thylakoid membrane. May play a role in inhibiting senescence. In Pisum sativum (Garden pea), this protein is Inner membrane protein PPF-1, chloroplastic (PPF-1).